We begin with the raw amino-acid sequence, 232 residues long: Histone H1B (232 aa).

Positions 1–18 are enriched in low complexity; sequence MSDPAVEVTPAVPVASPA. Disordered regions lie at residues 1 to 44 and 99 to 232; these read MSDP…PPVS and QTKG…AKKA. An H15 domain is found at 39–113; the sequence is THPPVSEMVV…GASGSFKLPA (75 aa). Basic residues-rich tracts occupy residues 132–141, 147–173, 181–197, 205–214, and 222–232; these read KPKKAAAKPK, KVKK…KTTK, AAKK…KPKA, KRAAAPKAKK, and KAAKKPAAKKA.

This sequence belongs to the histone H1/H5 family.

It is found in the nucleus. Its subcellular location is the chromosome. In terms of biological role, histones H1 are necessary for the condensation of nucleosome chains into higher-order structures. This is Histone H1B from Chironomus tentans (Midge).